A 205-amino-acid polypeptide reads, in one-letter code: Thiamine-phosphate synthase (205 aa).

4-amino-2-methyl-5-(diphosphooxymethyl)pyrimidine is bound by residues 34-38 and Asn66; that span reads QLRCK. The Mg(2+) site is built by Asp67 and Asp86. Ser105 lines the 4-amino-2-methyl-5-(diphosphooxymethyl)pyrimidine pocket. 131-133 is a binding site for 2-[(2R,5Z)-2-carboxy-4-methylthiazol-5(2H)-ylidene]ethyl phosphate; it reads TTT. Lys134 is a 4-amino-2-methyl-5-(diphosphooxymethyl)pyrimidine binding site. Gly163 lines the 2-[(2R,5Z)-2-carboxy-4-methylthiazol-5(2H)-ylidene]ethyl phosphate pocket.

This sequence belongs to the thiamine-phosphate synthase family. The cofactor is Mg(2+).

It catalyses the reaction 2-[(2R,5Z)-2-carboxy-4-methylthiazol-5(2H)-ylidene]ethyl phosphate + 4-amino-2-methyl-5-(diphosphooxymethyl)pyrimidine + 2 H(+) = thiamine phosphate + CO2 + diphosphate. It carries out the reaction 2-(2-carboxy-4-methylthiazol-5-yl)ethyl phosphate + 4-amino-2-methyl-5-(diphosphooxymethyl)pyrimidine + 2 H(+) = thiamine phosphate + CO2 + diphosphate. The enzyme catalyses 4-methyl-5-(2-phosphooxyethyl)-thiazole + 4-amino-2-methyl-5-(diphosphooxymethyl)pyrimidine + H(+) = thiamine phosphate + diphosphate. The protein operates within cofactor biosynthesis; thiamine diphosphate biosynthesis; thiamine phosphate from 4-amino-2-methyl-5-diphosphomethylpyrimidine and 4-methyl-5-(2-phosphoethyl)-thiazole: step 1/1. Its function is as follows. Condenses 4-methyl-5-(beta-hydroxyethyl)thiazole monophosphate (THZ-P) and 2-methyl-4-amino-5-hydroxymethyl pyrimidine pyrophosphate (HMP-PP) to form thiamine monophosphate (TMP). This chain is Thiamine-phosphate synthase, found in Neisseria meningitidis serogroup B (strain ATCC BAA-335 / MC58).